Consider the following 496-residue polypeptide: Probable cytosol aminopeptidase (496 aa).

The Mn(2+) site is built by Lys-258 and Asp-263. Lys-270 is an active-site residue. Residues Asp-281, Asp-340, and Glu-342 each contribute to the Mn(2+) site. The active site involves Arg-344.

Belongs to the peptidase M17 family. Requires Mn(2+) as cofactor.

It is found in the cytoplasm. It carries out the reaction Release of an N-terminal amino acid, Xaa-|-Yaa-, in which Xaa is preferably Leu, but may be other amino acids including Pro although not Arg or Lys, and Yaa may be Pro. Amino acid amides and methyl esters are also readily hydrolyzed, but rates on arylamides are exceedingly low.. It catalyses the reaction Release of an N-terminal amino acid, preferentially leucine, but not glutamic or aspartic acids.. Presumably involved in the processing and regular turnover of intracellular proteins. Catalyzes the removal of unsubstituted N-terminal amino acids from various peptides. The polypeptide is Probable cytosol aminopeptidase (Helicobacter pylori (strain Shi470)).